The following is a 514-amino-acid chain: 2-isopropylmalate synthase (514 aa).

One can recognise a Pyruvate carboxyltransferase domain in the interval 5–268 (LIIFDTTLRD…DVGLDTTQIV (264 aa)). Mn(2+) is bound by residues aspartate 14, histidine 202, histidine 204, and asparagine 239. A regulatory domain region spans residues 395 to 514 (KFVSLSQRSE…KDDKLNPQRS (120 aa)).

This sequence belongs to the alpha-IPM synthase/homocitrate synthase family. LeuA type 1 subfamily. In terms of assembly, homodimer. Mn(2+) is required as a cofactor.

It localises to the cytoplasm. The catalysed reaction is 3-methyl-2-oxobutanoate + acetyl-CoA + H2O = (2S)-2-isopropylmalate + CoA + H(+). It participates in amino-acid biosynthesis; L-leucine biosynthesis; L-leucine from 3-methyl-2-oxobutanoate: step 1/4. In terms of biological role, catalyzes the condensation of the acetyl group of acetyl-CoA with 3-methyl-2-oxobutanoate (2-ketoisovalerate) to form 3-carboxy-3-hydroxy-4-methylpentanoate (2-isopropylmalate). This Burkholderia ambifaria (strain ATCC BAA-244 / DSM 16087 / CCUG 44356 / LMG 19182 / AMMD) (Burkholderia cepacia (strain AMMD)) protein is 2-isopropylmalate synthase.